The following is a 282-amino-acid chain: MPLEIEVSESEMKEFKESTIDDDLESVSSEETLTQSMVDVSEEDEGLYNDITVEEKPSGDGCEEIESDEGEFDYIPIFNERTIKEMLLPYSSWTEYLTNSRAILPSITFDDKSDYDLDMRGWRQFPLAPILAEKCSGIYFFLQTLSGKKLLVDGPTWVPVSWLVCTFANVIEEADTRDISVVSNEKLQRLWDERIIGPDNDRRRKEDSKARSRLTRREEHSEHHRSGKSRRERERRSSAVQEINRRHHKRYDSDDKPWGLKREDAIYQHRAGSSHGRRHHPY.

Disordered regions lie at residues 1–45 (MPLE…EEDE) and 201–259 (DRRR…KPWG). The segment covering 10–19 (SEMKEFKEST) has biased composition (basic and acidic residues). A compositionally biased stretch (polar residues) spans 26–38 (SVSSEETLTQSMV). Over residues 201 to 237 (DRRRKEDSKARSRLTRREEHSEHHRSGKSRRERERRS) the composition is skewed to basic and acidic residues.

This is an uncharacterized protein from Ostreid herpesvirus 1 (isolate France) (OsHV-1).